Here is a 460-residue protein sequence, read N- to C-terminus: MKNEMWSGRFSGASDELLKEFNASLNVDKTLFNEDIQGSIAHATMLESCGILKKEELDAIVKGLEQVRSEIEQGKFIFDIKDEDIHMAIEKRLSEIIGSEIGGRLHTARSRNDQVATDFKLFVKKSHIELIKLLKELIQTMLEHAKVHKKTIMPSFTHLQHAQPVSFSFYILAYAFMLMRDVKRLQNSLELAGFSPLGSCACAGTSYATNRELSAKILGFKDIMPNAMDGVSDRDFVLDLLYDIAVIFTHTSRLCEEMILFSSSEFSFITISDSFSTGSSIMPQKKNPDVCELIRGKTGRVYGNLISLLTIMKALPLAYNKDMQEDKEGLFDSVKTAKDSLIILNVMLKEIRINKENMLNACKKGHLLATDLADYLVREKNIPFRKAHFIVGNVVAQAEVQGIDISEIKDLSKIDPIFDEKAMELLNFEFSLNSKQSEGSSSIASVEKQIQILQEFIKKL.

The protein belongs to the lyase 1 family. Argininosuccinate lyase subfamily.

The protein resides in the cytoplasm. The catalysed reaction is 2-(N(omega)-L-arginino)succinate = fumarate + L-arginine. Its pathway is amino-acid biosynthesis; L-arginine biosynthesis; L-arginine from L-ornithine and carbamoyl phosphate: step 3/3. The protein is Argininosuccinate lyase of Campylobacter jejuni subsp. doylei (strain ATCC BAA-1458 / RM4099 / 269.97).